A 217-amino-acid polypeptide reads, in one-letter code: MFKKKNISLAVIRRLPRYLRYVEDLLNHDVLRISSSELSQRMGYTASQVRQDFNNFGGFGQQGYGYSTQVLYENLVKILGLDRNFKMVIVGVGNLGQALANYANFYKKGFRLIGLFDIDPQKVGKTIRDIKIEHIDKLKDFIKKNDVDIGVLCVPADVAQEVADIMVEGGIKGIWNFTAKEIEVKGDVVVENVHLIDSLMVLSYKLNEKLLEKERIK.

A DNA-binding region (H-T-H motif) is located at residues 17–56 (RYLRYVEDLLNHDVLRISSSELSQRMGYTASQVRQDFNNF). 91–96 (GVGNLG) contacts NAD(+).

It belongs to the transcriptional regulatory Rex family. Homodimer.

It is found in the cytoplasm. Modulates transcription in response to changes in cellular NADH/NAD(+) redox state. The chain is Redox-sensing transcriptional repressor Rex from Caldicellulosiruptor bescii (strain ATCC BAA-1888 / DSM 6725 / KCTC 15123 / Z-1320) (Anaerocellum thermophilum).